The primary structure comprises 130 residues: Protein NrdI (130 aa).

This sequence belongs to the NrdI family.

Its function is as follows. Probably involved in ribonucleotide reductase function. The sequence is that of Protein NrdI from Bacillus velezensis (strain DSM 23117 / BGSC 10A6 / LMG 26770 / FZB42) (Bacillus amyloliquefaciens subsp. plantarum).